Here is a 352-residue protein sequence, read N- to C-terminus: 3'(2'),5'-bisphosphate nucleotidase (352 aa).

Catalysis depends on Asp-45, which acts as the Proton acceptor. 4 residues coordinate Mg(2+): Glu-68, Asp-133, Ile-135, and Asp-136. The active-site Proton acceptor is the Thr-138. Adenosine 3',5'-bisphosphate-binding residues include Thr-138, His-240, Ser-264, Lys-267, Arg-281, and Asp-294. His-240, Ser-264, Lys-267, Arg-281, and Asp-294 together coordinate AMP. Mg(2+) is bound at residue Asp-294.

Belongs to the inositol monophosphatase superfamily. Mg(2+) serves as cofactor.

It catalyses the reaction 3'-phosphoadenylyl sulfate + H2O = adenosine 5'-phosphosulfate + phosphate. The enzyme catalyses adenosine 3',5'-bisphosphate + H2O = AMP + phosphate. It carries out the reaction adenosine 2',5'-bisphosphate + H2O = AMP + phosphate. Phosphatase that converts adenosine 3'-phosphate 5'-phosphosulfate (PAPS) to adenosine 5'-phosphosulfate (APS) and 3'(2')-phosphoadenosine 5'-phosphate (PAP) to AMP. May regulate the flux of sulfur in the sulfur-activation pathway by converting PAPS to APS. Involved in osmoadaptation. The protein is 3'(2'),5'-bisphosphate nucleotidase of Emericella nidulans (strain FGSC A4 / ATCC 38163 / CBS 112.46 / NRRL 194 / M139) (Aspergillus nidulans).